The sequence spans 513 residues: MEMAKEQEMILVLDFGSQYNQLITRRIREMGVYSELHDHEISIEEIKKMNPKGIILSGGPNSVYEEGSYTIDPEIYNLGVPVLGICYGMQLTTKLLGGKVERANEREYGKAIIHAKADELFFGLPEEQTVWMSHSDKVIEIPEGFESIADSPSTPYAAIEDKERRIYGVQFHPEVRHTEYGNDILRNFVRRICDCTGEWTMENFIDLEIEKIREQVGDRKVLCAMSGGVDSSVVAVLLHKAIGDQLTCIFVDHGLLRKGEGDMVMEQFGEGFNMNIIRVNAKDRFMDKLKGVSDPEQKRKIIGNEFVYVFDDEASKLEGVDFLAQGTLYTDVIESGTKTAQTIKSHHNVGGLPEDMQFELIEPINTLFKDEVRALGIELGIPEHLVWRQPFPGPGLGIRVLGEITEEKLEIVRESDAILREVIREEGLEREIWQYFTVLPGMRSVGVMGDYRTYDYTIGIRAVTSIDGMTSDFARIDWEVLQKISSRIVNEVDHVNRVVYDVTSKPPSTIEWE.

A Glutamine amidotransferase type-1 domain is found at 9 to 198 (MILVLDFGSQ…VRRICDCTGE (190 aa)). Residue Cys86 is the Nucleophile of the active site. Catalysis depends on residues His172 and Glu174. One can recognise a GMPS ATP-PPase domain in the interval 199-388 (WTMENFIDLE…LGIPEHLVWR (190 aa)). Residue 226-232 (SGGVDSS) coordinates ATP.

In terms of assembly, homodimer.

The enzyme catalyses XMP + L-glutamine + ATP + H2O = GMP + L-glutamate + AMP + diphosphate + 2 H(+). It functions in the pathway purine metabolism; GMP biosynthesis; GMP from XMP (L-Gln route): step 1/1. Catalyzes the synthesis of GMP from XMP. This chain is GMP synthase [glutamine-hydrolyzing], found in Staphylococcus carnosus (strain TM300).